We begin with the raw amino-acid sequence, 252 residues long: Chitooligosaccharide deacetylase (252 aa).

Mg(2+) contacts are provided by His61 and His125.

It belongs to the YdjC deacetylase family. ChbG subfamily. As to quaternary structure, homodimer. Mg(2+) is required as a cofactor.

The protein localises to the cytoplasm. The enzyme catalyses N,N'-diacetylchitobiose + H2O = N-acetyl-beta-D-glucosaminyl-(1-&gt;4)-D-glucosamine + acetate. It carries out the reaction diacetylchitobiose-6'-phosphate + H2O = N'-monoacetylchitobiose-6'-phosphate + acetate. It participates in glycan degradation; chitin degradation. In terms of biological role, involved in the degradation of chitin. ChbG is essential for growth on the acetylated chitooligosaccharides chitobiose and chitotriose but is dispensable for growth on cellobiose and chitosan dimer, the deacetylated form of chitobiose. Deacetylation of chitobiose-6-P and chitotriose-6-P is necessary for both the activation of the chb promoter by the regulatory protein ChbR and the hydrolysis of phosphorylated beta-glucosides by the phospho-beta-glucosidase ChbF. Catalyzes the removal of only one acetyl group from chitobiose-6-P to yield monoacetylchitobiose-6-P, the inducer of ChbR and the substrate of ChbF. The protein is Chitooligosaccharide deacetylase of Escherichia coli (strain 55989 / EAEC).